The primary structure comprises 383 residues: MARDLYETLNVSRDASKEDIKRAYRKLARQYHPDVNKDAGAEDTFKELSRAYEVLSDDDQRARYDRFGEAGLNGGVGGGPGDFAGAAGFGDISDIFESFFGGFAGAGTGGRRATRPGGPTRGDDLRYDMVLEFQEAIFGGEKEITINHLITCETCRGSGSKPGSGPMTCRNCGGQGQIRQARRTPFGLFTQVAACPNCQGTGEVIESPCPTCSGRGRNQKQTTIKITIPAGVDAGSRLRVQGEGDAGMRGGPPGDLFIYVSVRNHPVFRREGQDIYSIAEISYLQAILGSQMSVETVDGPQTVVVPPGTQPETVLTLDGKGVPRIGNPTRRGNHYLQLKVVIPTKLGAEERELLTKLAKARGEKVSKKEGLEGLIDSIGNLFH.

A J domain is found at 4–68 (DLYETLNVSR…DQRARYDRFG (65 aa)). The CR-type zinc finger occupies 139-221 (GGEKEITINH…CSGRGRNQKQ (83 aa)). Zn(2+)-binding residues include Cys152, Cys155, Cys169, Cys172, Cys195, Cys198, Cys209, and Cys212. 4 CXXCXGXG motif repeats span residues 152–159 (CETCRGSG), 169–176 (CRNCGGQG), 195–202 (CPNCQGTG), and 209–216 (CPTCSGRG).

Belongs to the DnaJ family. In terms of assembly, homodimer. Zn(2+) serves as cofactor.

Its subcellular location is the cytoplasm. In terms of biological role, participates actively in the response to hyperosmotic and heat shock by preventing the aggregation of stress-denatured proteins and by disaggregating proteins, also in an autonomous, DnaK-independent fashion. Unfolded proteins bind initially to DnaJ; upon interaction with the DnaJ-bound protein, DnaK hydrolyzes its bound ATP, resulting in the formation of a stable complex. GrpE releases ADP from DnaK; ATP binding to DnaK triggers the release of the substrate protein, thus completing the reaction cycle. Several rounds of ATP-dependent interactions between DnaJ, DnaK and GrpE are required for fully efficient folding. Also involved, together with DnaK and GrpE, in the DNA replication of plasmids through activation of initiation proteins. This chain is Chaperone protein DnaJ, found in Gloeobacter violaceus (strain ATCC 29082 / PCC 7421).